Here is a 48-residue protein sequence, read N- to C-terminus: Cuticle protein 6 isoform b (48 aa).

This chain is Cuticle protein 6 isoform b, found in Limulus polyphemus (Atlantic horseshoe crab).